We begin with the raw amino-acid sequence, 301 residues long: Acetyl-coenzyme A carboxylase carboxyl transferase subunit beta (301 aa).

Positions 25-294 constitute a CoA carboxyltransferase N-terminal domain; it reads LWIKCPETGE…SAANDVTRGA (270 aa).

Belongs to the AccD/PCCB family. In terms of assembly, acetyl-CoA carboxylase is a heterohexamer composed of biotin carboxyl carrier protein (AccB), biotin carboxylase (AccC) and two subunits each of ACCase subunit alpha (AccA) and ACCase subunit beta (AccD).

The protein resides in the cytoplasm. The catalysed reaction is N(6)-carboxybiotinyl-L-lysyl-[protein] + acetyl-CoA = N(6)-biotinyl-L-lysyl-[protein] + malonyl-CoA. Its pathway is lipid metabolism; malonyl-CoA biosynthesis; malonyl-CoA from acetyl-CoA: step 1/1. Component of the acetyl coenzyme A carboxylase (ACC) complex. Biotin carboxylase (BC) catalyzes the carboxylation of biotin on its carrier protein (BCCP) and then the CO(2) group is transferred by the transcarboxylase to acetyl-CoA to form malonyl-CoA. The sequence is that of Acetyl-coenzyme A carboxylase carboxyl transferase subunit beta from Rhizobium etli (strain ATCC 51251 / DSM 11541 / JCM 21823 / NBRC 15573 / CFN 42).